Here is a 307-residue protein sequence, read N- to C-terminus: 4-diphosphocytidyl-2-C-methyl-D-erythritol kinase (307 aa).

Lys16 is a catalytic residue. 101-111 lines the ATP pocket; it reads PVAGGMAGGSA. Residue Asp143 is part of the active site.

Belongs to the GHMP kinase family. IspE subfamily.

It catalyses the reaction 4-CDP-2-C-methyl-D-erythritol + ATP = 4-CDP-2-C-methyl-D-erythritol 2-phosphate + ADP + H(+). The protein operates within isoprenoid biosynthesis; isopentenyl diphosphate biosynthesis via DXP pathway; isopentenyl diphosphate from 1-deoxy-D-xylulose 5-phosphate: step 3/6. Catalyzes the phosphorylation of the position 2 hydroxy group of 4-diphosphocytidyl-2C-methyl-D-erythritol. The protein is 4-diphosphocytidyl-2-C-methyl-D-erythritol kinase of Nocardia farcinica (strain IFM 10152).